A 282-amino-acid chain; its full sequence is Protease HtpX homolog (282 aa).

2 consecutive transmembrane segments (helical) span residues 6-26 (TFIL…LIGG) and 28-48 (QGVI…YFFS). Zn(2+) is bound at residue His-130. Glu-131 is an active-site residue. Position 134 (His-134) interacts with Zn(2+). The next 2 membrane-spanning stretches (helical) occupy residues 140–160 (ILIG…ANFA) and 177–197 (ILMI…QMAI). Residue Glu-202 coordinates Zn(2+).

The protein belongs to the peptidase M48B family. Zn(2+) serves as cofactor.

Its subcellular location is the cell inner membrane. This is Protease HtpX homolog from Campylobacter hominis (strain ATCC BAA-381 / DSM 21671 / CCUG 45161 / LMG 19568 / NCTC 13146 / CH001A).